Here is a 589-residue protein sequence, read N- to C-terminus: Protein FAM117B (589 aa).

Residues 1-310 are disordered; the sequence is MSQRVRRNGS…RDKERQSPFH (310 aa). Ser-10 is modified (phosphoserine). Positions 16–29 are enriched in gly residues; it reads SLGGGAVATAGGPG. Residues 45–56 are compositionally biased toward low complexity; the sequence is QQQQQQHGSPTR. Over residues 57-85 the composition is skewed to gly residues; the sequence is SGGGGGGNNNGGCCGGASGPAGGGGGGGP. Ser-106 carries the post-translational modification Phosphoserine. Over residues 108-136 the composition is skewed to low complexity; sequence TVATQTGASATSTRGTSPTRSAAPGARGS. Residues 137–146 are compositionally biased toward pro residues; it reads PPRPPPPPPL. Composition is skewed to low complexity over residues 147 to 158 and 207 to 220; these read LGTVSSPSSSPT and PSSS…RTSS. A phosphoserine mark is found at Ser-210, Ser-219, Ser-220, and Ser-273. A compositionally biased stretch (basic residues) spans 292-302; the sequence is RSKHSSRHHRD. 2 positions are modified to phosphoserine: Ser-345 and Ser-391. Disordered regions lie at residues 370 to 464 and 556 to 589; these read QDIP…NNSY and STNT…EAEG. Residues 384-397 show a composition bias toward polar residues; sequence QRSSSTRSIDTQTP. Low complexity predominate over residues 404–417; it reads SNNSSRSQSVSPTS. 2 positions are modified to phosphoserine: Ser-449 and Ser-457.

The polypeptide is Protein FAM117B (FAM117B) (Homo sapiens (Human)).